Here is a 199-residue protein sequence, read N- to C-terminus: Replication protein (199 aa).

Belongs to the Gram-positive plasmids replication protein type 2 family.

Its function is as follows. Is essential for plasmid replication. Nicks the positive strand at the plus origin of replication. The protein is Replication protein (repF) of Staphylococcus aureus.